A 339-amino-acid polypeptide reads, in one-letter code: NADH-quinone oxidoreductase subunit H (339 aa).

Helical transmembrane passes span 7 to 27 (LFWI…AVAY), 77 to 97 (VLFV…WAVI), 112 to 132 (LLYI…AGWA), 149 to 169 (VVSY…AAGS), 180 to 200 (AGGI…VYWI), 235 to 255 (VFFL…AVMF), 276 to 296 (VPGV…YLWF), and 315 to 335 (VLIP…VTGF).

The protein belongs to the complex I subunit 1 family. As to quaternary structure, NDH-1 is composed of 14 different subunits. Subunits NuoA, H, J, K, L, M, N constitute the membrane sector of the complex.

The protein localises to the cell inner membrane. The catalysed reaction is a quinone + NADH + 5 H(+)(in) = a quinol + NAD(+) + 4 H(+)(out). Its function is as follows. NDH-1 shuttles electrons from NADH, via FMN and iron-sulfur (Fe-S) centers, to quinones in the respiratory chain. The immediate electron acceptor for the enzyme in this species is believed to be ubiquinone. Couples the redox reaction to proton translocation (for every two electrons transferred, four hydrogen ions are translocated across the cytoplasmic membrane), and thus conserves the redox energy in a proton gradient. This subunit may bind ubiquinone. The sequence is that of NADH-quinone oxidoreductase subunit H from Alkalilimnicola ehrlichii (strain ATCC BAA-1101 / DSM 17681 / MLHE-1).